A 349-amino-acid chain; its full sequence is Anthranilate phosphoribosyltransferase (349 aa).

Residues Gly-82, 85 to 86 (GD), 92 to 95 (NVST), 110 to 118 (KHGNRAVSG), and Ser-122 each bind 5-phospho-alpha-D-ribose 1-diphosphate. Gly-82 serves as a coordination point for anthranilate. Ser-94 lines the Mg(2+) pocket. An anthranilate-binding site is contributed by Asn-113. Arg-168 lines the anthranilate pocket. Positions 227 and 228 each coordinate Mg(2+).

It belongs to the anthranilate phosphoribosyltransferase family. In terms of assembly, homodimer. Requires Mg(2+) as cofactor.

The enzyme catalyses N-(5-phospho-beta-D-ribosyl)anthranilate + diphosphate = 5-phospho-alpha-D-ribose 1-diphosphate + anthranilate. The protein operates within amino-acid biosynthesis; L-tryptophan biosynthesis; L-tryptophan from chorismate: step 2/5. Functionally, catalyzes the transfer of the phosphoribosyl group of 5-phosphorylribose-1-pyrophosphate (PRPP) to anthranilate to yield N-(5'-phosphoribosyl)-anthranilate (PRA). The sequence is that of Anthranilate phosphoribosyltransferase from Pseudomonas fluorescens (strain Pf0-1).